Here is a 436-residue protein sequence, read N- to C-terminus: Divalent metal cation transporter MntH (436 aa).

A compositionally biased stretch (basic and acidic residues) spans 1-22 (MDSRSPSLPDDRPDPPEQHLDA). The interval 1–31 (MDSRSPSLPDDRPDPPEQHLDARAGATLRGT) is disordered. 11 consecutive transmembrane segments (helical) span residues 40-60 (ILPF…PGNF), 71-91 (GYSL…IQNL), 115-135 (LVWF…LAEF), 144-164 (LLTG…TFWL), 177-197 (LAVG…VVLA), 216-236 (GSAY…VIYL), 264-284 (VIAA…VAAA), 304-324 (LTPL…LASG), 354-374 (LITM…SSVL), 375-395 (ILSQ…LLLF), and 411-431 (FTVI…YLLW).

Belongs to the NRAMP family.

It localises to the cell membrane. Functionally, h(+)-stimulated, divalent metal cation uptake system. This is Divalent metal cation transporter MntH from Deinococcus radiodurans (strain ATCC 13939 / DSM 20539 / JCM 16871 / CCUG 27074 / LMG 4051 / NBRC 15346 / NCIMB 9279 / VKM B-1422 / R1).